The sequence spans 223 residues: Endonuclease V (223 aa).

The Mg(2+) site is built by aspartate 35 and aspartate 103.

This sequence belongs to the endonuclease V family. Mg(2+) is required as a cofactor.

The protein localises to the cytoplasm. It carries out the reaction Endonucleolytic cleavage at apurinic or apyrimidinic sites to products with a 5'-phosphate.. Functionally, DNA repair enzyme involved in the repair of deaminated bases. Selectively cleaves double-stranded DNA at the second phosphodiester bond 3' to a deoxyinosine leaving behind the intact lesion on the nicked DNA. The chain is Endonuclease V from Salmonella enteritidis PT4 (strain P125109).